Reading from the N-terminus, the 500-residue chain is L-arabinose isomerase (500 aa).

Mn(2+) is bound by residues Glu306, Glu333, His350, and His450.

Belongs to the arabinose isomerase family. As to quaternary structure, homohexamer. The cofactor is Mn(2+).

The enzyme catalyses beta-L-arabinopyranose = L-ribulose. It participates in carbohydrate degradation; L-arabinose degradation via L-ribulose; D-xylulose 5-phosphate from L-arabinose (bacterial route): step 1/3. Functionally, catalyzes the conversion of L-arabinose to L-ribulose. This chain is L-arabinose isomerase, found in Escherichia coli O157:H7.